A 405-amino-acid chain; its full sequence is 3-isopropylmalate dehydrogenase 2, chloroplastic (405 aa).

The transit peptide at 1–33 (MAAALQTNIRTVKVPATFRAVSKQSLAPFRVRC) directs the protein to the chloroplast. Position 70 is a phosphoserine (S70). 114–129 (IGGYKWDNNEKHLRPE) is a binding site for NAD(+). Substrate contacts are provided by R136, R146, and R174. N234 provides a ligand contact to NAD(+). D264 contacts substrate. A Mg(2+)-binding site is contributed by D264. NAD(+) is bound at residue N265. Mg(2+) contacts are provided by D288 and D292. 318–334 (EPIHGSAPDIAGQDKAN) provides a ligand contact to NAD(+).

It belongs to the isocitrate and isopropylmalate dehydrogenases family. In terms of assembly, homodimer. Mg(2+) is required as a cofactor. It depends on Mn(2+) as a cofactor. In terms of tissue distribution, expressed at low levels in seedlings, cotyledons, hypocotyls, flowers, roots, pollen, leaves and stems.

The protein localises to the plastid. Its subcellular location is the chloroplast stroma. The enzyme catalyses (2R,3S)-3-isopropylmalate + NAD(+) = 4-methyl-2-oxopentanoate + CO2 + NADH. It functions in the pathway amino-acid biosynthesis; L-leucine biosynthesis; L-leucine from 3-methyl-2-oxobutanoate: step 3/4. Its activity is regulated as follows. Regulated by a thiol-based redox modification. In terms of biological role, involved in leucine biosynthesis; catalyzes the oxidative decarboxylation step in leucine biosynthesis (primary metabolism). Catalyzes the oxidation of 3-carboxy-2-hydroxy-4-methylpentanoate (3-isopropylmalate, 3-IPM) to 3-carboxy-4-methyl-2-oxopentanoate. The product decarboxylates to 4-methyl-2 oxopentanoate. Required during pollen development and involved in embryo sac development. The chain is 3-isopropylmalate dehydrogenase 2, chloroplastic from Arabidopsis thaliana (Mouse-ear cress).